The chain runs to 860 residues: Semaphorin-3aa (860 aa).

The signal sequence occupies residues 1-17 (MDYLVGIFLLLCGVALP). The Sema domain maps to 31-515 (RLKLSYNEML…SDLGISQMPL (485 aa)). A glycan (N-linked (GlcNAc...) asparagine) is linked at asparagine 53. A disulfide bond links cysteine 104 and cysteine 115. Asparagine 126 is a glycosylation site (N-linked (GlcNAc...) asparagine). 4 disulfide bridges follow: cysteine 133/cysteine 142, cysteine 270/cysteine 382, cysteine 294/cysteine 342, and cysteine 518/cysteine 536. The Ig-like C2-type domain occupies 579–668 (GYSSVEERSV…FIQPLRRINL (90 aa)). N-linked (GlcNAc...) asparagine glycosylation is present at asparagine 593. Cysteine 652 and cysteine 717 form a disulfide bridge. The interval 725-860 (KKPKGKKAPK…HEQQRPPRSV (136 aa)) is disordered. Composition is skewed to polar residues over residues 748 to 764 (TPQT…QRAQ) and 782 to 818 (TGLQ…QPNQ). Basic and acidic residues predominate over residues 838–860 (QLQENKRGRNRRTHEQQRPPRSV).

It belongs to the semaphorin family.

Its subcellular location is the secreted. Functionally, may influence outgrowth by a variety of growth cones including those of the posterior lateral line ganglion. This is Semaphorin-3aa (sema3aa) from Danio rerio (Zebrafish).